The sequence spans 340 residues: Anthranilate phosphoribosyltransferase (340 aa).

5-phospho-alpha-D-ribose 1-diphosphate is bound by residues G83, 86–87, T91, 93–96, 111–119, and S123; these read GD, NVST, and KHGNRSVSS. Residue G83 participates in anthranilate binding. Position 95 (S95) interacts with Mg(2+). Anthranilate is bound at residue N114. R169 contacts anthranilate. 2 residues coordinate Mg(2+): D228 and E229.

The protein belongs to the anthranilate phosphoribosyltransferase family. Homodimer. The cofactor is Mg(2+).

It catalyses the reaction N-(5-phospho-beta-D-ribosyl)anthranilate + diphosphate = 5-phospho-alpha-D-ribose 1-diphosphate + anthranilate. Its pathway is amino-acid biosynthesis; L-tryptophan biosynthesis; L-tryptophan from chorismate: step 2/5. Functionally, catalyzes the transfer of the phosphoribosyl group of 5-phosphorylribose-1-pyrophosphate (PRPP) to anthranilate to yield N-(5'-phosphoribosyl)-anthranilate (PRA). This is Anthranilate phosphoribosyltransferase from Aquifex aeolicus (strain VF5).